The primary structure comprises 213 residues: Probable GTP-binding protein EngB (213 aa).

Residues 25–203 (EGTEVAFAGR…EDVLNGWLLP (179 aa)) form the EngB-type G domain. GTP contacts are provided by residues 33-40 (GRSNAGKS), 60-64 (GRTQL), 80-83 (DLPG), 147-150 (TKAD), and 179-184 (AQMFSA). Mg(2+) contacts are provided by Ser-40 and Thr-62.

Belongs to the TRAFAC class TrmE-Era-EngA-EngB-Septin-like GTPase superfamily. EngB GTPase family. The cofactor is Mg(2+).

Its function is as follows. Necessary for normal cell division and for the maintenance of normal septation. The polypeptide is Probable GTP-binding protein EngB (Saccharophagus degradans (strain 2-40 / ATCC 43961 / DSM 17024)).